The following is a 563-amino-acid chain: MRASQYFIPTLKEAPAEAEVPSHIYLIRAGFIRQLAAGLYEYLPLGFRVLKKIEGIIRKYMDDAGALEVLLPILAPAELWQETGRWDVYGKELFRVEDRKGRFFALGPTHEETITDLVRKNIRSYKDLPKNFYQIQTKFRDEARPRYGLIRGREFIMKDAYSFDISEEMAVKSYEIMKEAYKKIFDELGLDYLMVEADVGAIGGKYSHEFVVKVPNGEAHIVFCDNCGYAANVEAAKYEFELDKLPPEDEKPLEKVHTPGVSSVEDVSRFLDINQKKIVKTLVYILDDGTAVAVLIRGDRELNETKLINYFKALDCHLASSEELKDLGIVEGFVGPMGLDIPVYADISVKDLHNFVVGANEEDYHYINVNIPRDFKPVDFVDFSTAREGDPCPVCKKPLNETTGLEVGHIFLLGTKYSEALKAYFVDKDGREKPIVMGCYGIGVSRLMAAAVEQSHDENGIIWPENIAPFKLHILALNIKDDQIKTVAEDIYTKAKEKGIEVLFDDRDISPGAKFKDADLIGIPYRIVVGRGVKNGKVEIQTRKDGKKEEIDINEIDNFLDRL.

Belongs to the class-II aminoacyl-tRNA synthetase family. ProS type 1 subfamily. Homodimer.

The protein resides in the cytoplasm. It carries out the reaction tRNA(Pro) + L-proline + ATP = L-prolyl-tRNA(Pro) + AMP + diphosphate. In terms of biological role, catalyzes the attachment of proline to tRNA(Pro) in a two-step reaction: proline is first activated by ATP to form Pro-AMP and then transferred to the acceptor end of tRNA(Pro). As ProRS can inadvertently accommodate and process non-cognate amino acids such as alanine and cysteine, to avoid such errors it has two additional distinct editing activities against alanine. One activity is designated as 'pretransfer' editing and involves the tRNA(Pro)-independent hydrolysis of activated Ala-AMP. The other activity is designated 'posttransfer' editing and involves deacylation of mischarged Ala-tRNA(Pro). The misacylated Cys-tRNA(Pro) is not edited by ProRS. This is Proline--tRNA ligase from Persephonella marina (strain DSM 14350 / EX-H1).